The chain runs to 439 residues: MSKLYLMSLGCNKNLVDSEIMLGRLSAYELCDEPSKADVLIVNTCGFIDSAKKESINAILDLHEQRKKDSLLVVTGCLMQRYREELMKELPEVDLFTGVGDYERIDEMILKKTNLFSNSTYLQSENSKRIITGSNSHAFIKIAEGCNQKCSFCAIPSFKGKLKSREISSIIAELKDLVARGYKDFSFIAQDTSSYLFDKGEKDGLIRLIDEVEKIKGIRAARILYLYPTSASEALIKRIIASEIFINYFDMPLQHISDNMLKIMKRGANSTRLKEMLNLMKSAPNSFLRTGFIVGHPGESEADFEELCEFVKDFGFDRISVFAYSKEEDTAAFDMEQVPFKVINKRLKIIEKIVDEVIEKSFEKEVGQKRLVVCTGKSSEGEFFIAAKDLRWDREIDGEILINESECGNLEMGQIYECEILQNLDKKLLAKALRKVDAN.

Residues 2–114 enclose the MTTase N-terminal domain; sequence SKLYLMSLGC…IDEMILKKTN (113 aa). [4Fe-4S] cluster is bound by residues Cys11, Cys45, Cys77, Cys146, Cys150, and Cys153. The Radical SAM core domain maps to 132-363; that stretch reads TGSNSHAFIK…VDEVIEKSFE (232 aa).

The protein belongs to the methylthiotransferase family. RimO subfamily. [4Fe-4S] cluster serves as cofactor.

It localises to the cytoplasm. The enzyme catalyses L-aspartate(89)-[ribosomal protein uS12]-hydrogen + (sulfur carrier)-SH + AH2 + 2 S-adenosyl-L-methionine = 3-methylsulfanyl-L-aspartate(89)-[ribosomal protein uS12]-hydrogen + (sulfur carrier)-H + 5'-deoxyadenosine + L-methionine + A + S-adenosyl-L-homocysteine + 2 H(+). Its function is as follows. Catalyzes the methylthiolation of an aspartic acid residue of ribosomal protein uS12. This chain is Ribosomal protein uS12 methylthiotransferase RimO, found in Campylobacter jejuni subsp. jejuni serotype O:6 (strain 81116 / NCTC 11828).